We begin with the raw amino-acid sequence, 89 residues long: Small ribosomal subunit protein uS15 (89 aa).

It belongs to the universal ribosomal protein uS15 family. In terms of assembly, part of the 30S ribosomal subunit. Forms a bridge to the 50S subunit in the 70S ribosome, contacting the 23S rRNA.

In terms of biological role, one of the primary rRNA binding proteins, it binds directly to 16S rRNA where it helps nucleate assembly of the platform of the 30S subunit by binding and bridging several RNA helices of the 16S rRNA. Its function is as follows. Forms an intersubunit bridge (bridge B4) with the 23S rRNA of the 50S subunit in the ribosome. The chain is Small ribosomal subunit protein uS15 from Jannaschia sp. (strain CCS1).